The sequence spans 87 residues: Small ribosomal subunit protein uS15 (87 aa).

It belongs to the universal ribosomal protein uS15 family. Part of the 30S ribosomal subunit. Forms a bridge to the 50S subunit in the 70S ribosome, contacting the 23S rRNA.

In terms of biological role, one of the primary rRNA binding proteins, it binds directly to 16S rRNA where it helps nucleate assembly of the platform of the 30S subunit by binding and bridging several RNA helices of the 16S rRNA. Functionally, forms an intersubunit bridge (bridge B4) with the 23S rRNA of the 50S subunit in the ribosome. This is Small ribosomal subunit protein uS15 from Alkaliphilus metalliredigens (strain QYMF).